Reading from the N-terminus, the 121-residue chain is Large ribosomal subunit protein uL18 (121 aa).

This sequence belongs to the universal ribosomal protein uL18 family. In terms of assembly, part of the 50S ribosomal subunit; part of the 5S rRNA/L5/L18/L25 subcomplex. Contacts the 5S and 23S rRNAs.

Its function is as follows. This is one of the proteins that bind and probably mediate the attachment of the 5S RNA into the large ribosomal subunit, where it forms part of the central protuberance. In Streptococcus equi subsp. zooepidemicus (strain MGCS10565), this protein is Large ribosomal subunit protein uL18.